A 272-amino-acid chain; its full sequence is Shikimate dehydrogenase (NADP(+)) (272 aa).

Shikimate-binding positions include 14–16 and threonine 61; that span reads SKS. The Proton acceptor role is filled by lysine 65. Glutamate 77 lines the NADP(+) pocket. 2 residues coordinate shikimate: asparagine 86 and aspartate 102. NADP(+) contacts are provided by residues 126–130, 149–154, and methionine 213; these read GAGGA and NRTASR. Tyrosine 215 serves as a coordination point for shikimate. Glycine 237 contacts NADP(+).

It belongs to the shikimate dehydrogenase family. Homodimer.

The enzyme catalyses shikimate + NADP(+) = 3-dehydroshikimate + NADPH + H(+). The protein operates within metabolic intermediate biosynthesis; chorismate biosynthesis; chorismate from D-erythrose 4-phosphate and phosphoenolpyruvate: step 4/7. Its function is as follows. Involved in the biosynthesis of the chorismate, which leads to the biosynthesis of aromatic amino acids. Catalyzes the reversible NADPH linked reduction of 3-dehydroshikimate (DHSA) to yield shikimate (SA). In Salmonella schwarzengrund (strain CVM19633), this protein is Shikimate dehydrogenase (NADP(+)).